Here is a 1183-residue protein sequence, read N- to C-terminus: LRR receptor-like serine/threonine-protein kinase FLS2 (1183 aa).

Positions 1–41 (MERNKFASKMSQHYTKTICIAVVLVAVLFSLSSAAAAGSGA) are cleaved as a signal peptide. Topologically, residues 42–809 (AVSVQLEALL…GKKRVFSRTG (768 aa)) are extracellular. The cysteines at positions 87 and 94 are disulfide-linked. 2 N-linked (GlcNAc...) asparagine glycosylation sites follow: N88 and N120. LRR repeat units lie at residues 97–120 (AGQVTSIQLPESKLRGALSPFLGN), 121–145 (ISTLQVIDLTSNAFAGGIPPQLGRL), 147–169 (ELEQLVVSSNYFAGGIPSSLCNC), 171–193 (AMWALALNVNNLTGAIPSCIGDL), 194–217 (SNLEIFEAYLNNLDGELPPSMAKL), 218–241 (KGIMVVDLSCNQLSGSIPPEIGDL), 242–265 (SNLQILQLYENRFSGHIPRELGRC), 267–289 (NLTLLNIFSNGFTGEIPGELGEL), 290–313 (TNLEVMRLYKNALTSEIPRSLRRC), 315–337 (SLLNLDLSMNQLAGPIPPELGEL), 338–361 (PSLQRLSLHANRLAGTVPASLTNL), 363–385 (NLTILELSENHLSGPLPASIGSL), and 386–409 (RNLRRLIVQNNSLSGQIPASISNC). The cysteines at positions 167 and 189 are disulfide-linked. N-linked (GlcNAc...) asparagine glycans are attached at residues N168 and N181. The N-linked (GlcNAc...) asparagine glycan is linked to N267. Residues N363, N395, N408, and N414 are each glycosylated (N-linked (GlcNAc...) asparagine). LRR repeat units follow at residues 433-457 (LQSLMFLSLGQNSLAGDIPDDLFDC), 459-480 (QLQKLDLSENSFTGGLSRLVGQ), 481-505 (LGNLTVLQLQGNALSGEIPEEIGNM), 507-529 (KLISLKLGRNRFAGHVPASISNM), 530-553 (SSLQLLDLGHNRLDGVFPAEVFEL), 555-577 (QLTILGAGSNRFAGPIPDAVANL), 578-600 (RSLSFLDLSSNMLNGTVPAALGR), 601-625 (LDQLLTLDLSHNRLAGAIPGAVIAS), 627-651 (SNVQMYLNLSNNAFTGAIPAEIGGL), 652-675 (VMVQTIDLSNNQLSGGVPATLAGC), 676-699 (KNLYSLDLSGNSLTGELPANLFPQ), 701-724 (DLLTTLNISGNDLDGEIPADIAAL), 725-748 (KHIQTLDVSRNAFAGAIPPALANL), and 749-773 (TALRSLNLSSNTFEGPVPDGGVFRN). 3 N-linked (GlcNAc...) asparagine glycosylation sites follow: N483, N504, and N528. Residue N591 is glycosylated (N-linked (GlcNAc...) asparagine). A glycan (N-linked (GlcNAc...) asparagine) is linked at N634. N707, N747, N755, and N773 each carry an N-linked (GlcNAc...) asparagine glycan. A helical membrane pass occupies residues 810-830 (LVILVVLIALSTLLLLMVATI). The Cytoplasmic segment spans residues 831 to 1183 (LLVSYRRYRR…LKMSKLVGED (353 aa)). Residues 876-1179 (FDQGNVIGSS…LSSLLKMSKL (304 aa)) enclose the Protein kinase domain. Residues 882-890 (IGSSNLSTV) and K908 each bind ATP. The Proton acceptor role is filled by D1013.

It belongs to the protein kinase superfamily. Ser/Thr protein kinase family. In terms of assembly, interacts with SERK2.

The protein localises to the cell membrane. It carries out the reaction L-seryl-[protein] + ATP = O-phospho-L-seryl-[protein] + ADP + H(+). It catalyses the reaction L-threonyl-[protein] + ATP = O-phospho-L-threonyl-[protein] + ADP + H(+). In terms of biological role, constitutes the pattern-recognition receptor (PPR) that determines the specific perception of flagellin (flg22), a potent elicitor of the defense response to pathogen-associated molecular patterns (PAMPs). Recognizes flg22 from Pseudomonas aeruginosa and Acidovorax avenae. flg22 is a peptide derived from the bacterial flagellin N-terminus sequence. Does not recognize flg22 from Xanthomonas oryzae pv. oryzae (Xoo) or Xanthomonas oryzae pv. oryzicola (Xoc). The protein is LRR receptor-like serine/threonine-protein kinase FLS2 of Oryza sativa subsp. japonica (Rice).